Here is a 214-residue protein sequence, read N- to C-terminus: Holliday junction branch migration complex subunit RuvA (214 aa).

The domain I stretch occupies residues 1–63 (MISFLRGTVA…EDSLTLFGFS (63 aa)). The tract at residues 64-142 (SDDEREVFDV…PHGTGAAAAP (79 aa)) is domain II. Residues 143 to 153 (AAAASAPWKPQ) form a flexible linker region. Positions 153-214 (QVVAAMTSLG…RAGNRVGSRG (62 aa)) are domain III.

It belongs to the RuvA family. Homotetramer. Forms an RuvA(8)-RuvB(12)-Holliday junction (HJ) complex. HJ DNA is sandwiched between 2 RuvA tetramers; dsDNA enters through RuvA and exits via RuvB. An RuvB hexamer assembles on each DNA strand where it exits the tetramer. Each RuvB hexamer is contacted by two RuvA subunits (via domain III) on 2 adjacent RuvB subunits; this complex drives branch migration. In the full resolvosome a probable DNA-RuvA(4)-RuvB(12)-RuvC(2) complex forms which resolves the HJ.

It localises to the cytoplasm. Functionally, the RuvA-RuvB-RuvC complex processes Holliday junction (HJ) DNA during genetic recombination and DNA repair, while the RuvA-RuvB complex plays an important role in the rescue of blocked DNA replication forks via replication fork reversal (RFR). RuvA specifically binds to HJ cruciform DNA, conferring on it an open structure. The RuvB hexamer acts as an ATP-dependent pump, pulling dsDNA into and through the RuvAB complex. HJ branch migration allows RuvC to scan DNA until it finds its consensus sequence, where it cleaves and resolves the cruciform DNA. The polypeptide is Holliday junction branch migration complex subunit RuvA (Arthrobacter sp. (strain FB24)).